Here is a 231-residue protein sequence, read N- to C-terminus: Probable septum site-determining protein MinC (231 aa).

The interval 102–125 (KEKAPRPAPAPQAPAQNTTPVTKT) is disordered.

The protein belongs to the MinC family. As to quaternary structure, interacts with MinD and FtsZ.

In terms of biological role, cell division inhibitor that blocks the formation of polar Z ring septums. Rapidly oscillates between the poles of the cell to destabilize FtsZ filaments that have formed before they mature into polar Z rings. Prevents FtsZ polymerization. In Escherichia coli O6:K15:H31 (strain 536 / UPEC), this protein is Probable septum site-determining protein MinC.